The sequence spans 215 residues: uncharacterized protein (215 aa).

Helical transmembrane passes span 21–40 (IIKY…VLIN), 50–69 (LIFS…SVIF), 95–117 (FFAI…YVLF), 122–144 (LEII…LVVL), 156–178 (ANFV…GLIL), and 183–205 (LQLI…FLSS).

This sequence belongs to the CcmB/CycW/HelB family.

Its subcellular location is the cell membrane. This is an uncharacterized protein from Rickettsia conorii (strain ATCC VR-613 / Malish 7).